We begin with the raw amino-acid sequence, 88 residues long: MEWYMGKYIRPLSDAVFTIASDDLWIESLAIQQLHTTANLPNMQRVVGMPDLHPGRGYPIGAAFFSVGRFYPARRRGNGAGNRNGPLL.

This is an uncharacterized protein from Escherichia coli (strain K12).